The sequence spans 142 residues: Large ribosomal subunit protein uL13 (142 aa).

Belongs to the universal ribosomal protein uL13 family. In terms of assembly, part of the 50S ribosomal subunit.

Functionally, this protein is one of the early assembly proteins of the 50S ribosomal subunit, although it is not seen to bind rRNA by itself. It is important during the early stages of 50S assembly. The sequence is that of Large ribosomal subunit protein uL13 from Saccharophagus degradans (strain 2-40 / ATCC 43961 / DSM 17024).